Consider the following 556-residue polypeptide: Solute carrier family 22 member 1 (556 aa).

The Cytoplasmic portion of the chain corresponds to 1-21 (MPTVDDVLEQVGEFGWFQKQA). A helical transmembrane segment spans residues 22–42 (FLLLCLISASLAPIYVGIVFL). The Extracellular segment spans residues 43 to 150 (GFTPGHYCQN…LVCGDAWKVD (108 aa)). Residue Asn-71 is glycosylated (N-linked (GlcNAc...) asparagine). A helical transmembrane segment spans residues 151–171 (LFQSCVNLGFFLGSLVVGYIA). Topologically, residues 172–177 (DRFGRK) are cytoplasmic. A helical transmembrane segment spans residues 178–198 (LCLLVTTLVTSVSGVLTAVAP). Topologically, residues 199–211 (DYTSMLLFRLLQG) are extracellular. The helical transmembrane segment at 212–231 (MVSKGSWVSGYTLITEFVGS) threads the bilayer. Residues 232-238 (GYRRTTA) lie on the Cytoplasmic side of the membrane. Residues 239 to 259 (ILYQMAFTVGLVGLAGVAYAI) form a helical membrane-spanning segment. Residues 260 to 263 (PDWR) lie on the Extracellular side of the membrane. Residues 264–284 (WLQLAVSLPTFLFLLYYWFVP) form a helical membrane-spanning segment. The short motif at 284–288 (PESPR) is the Proline-rich sequence element. At 285 to 348 (ESPRWLLSQK…FRTPNLRKHT (64 aa)) the chain is on the cytoplasmic side. At Ser-334 the chain carries Phosphoserine. The helical transmembrane segment at 349-369 (VILMYLWFSCAVLYQGLIMHV) threads the bilayer. Residues 370-377 (GATGANLY) lie on the Extracellular side of the membrane. The chain crosses the membrane as a helical span at residues 378–398 (LDFFYSSLVEFPAAFIILVTI). Residues 399-403 (DRIGR) lie on the Cytoplasmic side of the membrane. Residues 404–424 (IYPIAASNLVTGAACLLMIFI) traverse the membrane as a helical segment. Over 425–429 (PHELH) the chain is Extracellular. Residues 430–452 (WLNVTLACLGRMGATIVLQMVCL) traverse the membrane as a helical segment. The Cytoplasmic segment spans residues 453–465 (VNAELYPTFIRNL). Residues 466–486 (GMMVCSALCDLGGIFTPFMVF) traverse the membrane as a helical segment. The Extracellular segment spans residues 487–493 (RLMEVWQ). Residues 494-514 (ALPLILFGVLGLTAGAMTLLL) traverse the membrane as a helical segment. The Cytoplasmic segment spans residues 515–556 (PETKGVALPETIEEAENLGRRKSKAKENTIYLQVQTGKSSST). Position 543 is a phosphothreonine (Thr-543).

This sequence belongs to the major facilitator (TC 2.A.1) superfamily. Organic cation transporter (TC 2.A.1.19) family. In terms of processing, phosphorylated. As to expression, expressed in kidney cortex in S1, S2 segments of renal proximal tubules as well as in kidney medulla. Expressed throughout the liver lobuli, in hepatocytes surrounding the central veins. Expressed in enterocytes of villi and crypts in small intestine. Expressed in brain, in some white matter regions like the corpus callosum and in the granular layer of the cerebellum. Expressed in Sertoli cells in testis. Expressed in colon. Expressed in tracheal and bronchial ciliated epithelium in the respiratory tract. Expressed in spleen, moderately in skin, and weakly in the gastrointestinal tract, lung, thymus, muscle, and prostate. Expressed in kidney cortex and medulla. Expressed in intestine, liver and colon.

It localises to the basolateral cell membrane. The protein resides in the apical cell membrane. It is found in the lateral cell membrane. Its subcellular location is the basal cell membrane. The protein localises to the cell membrane. The enzyme catalyses 1-methylnicotinamide(out) = 1-methylnicotinamide(in). It catalyses the reaction dopamine(out) = dopamine(in). The catalysed reaction is serotonin(out) = serotonin(in). It carries out the reaction (R)-adrenaline(out) = (R)-adrenaline(in). The enzyme catalyses (R)-noradrenaline(out) = (R)-noradrenaline(in). It catalyses the reaction histamine(out) = histamine(in). The catalysed reaction is guanidine(out) = guanidine(in). It carries out the reaction choline(out) = choline(in). The enzyme catalyses acetylcholine(in) = acetylcholine(out). It catalyses the reaction thiamine(in) = thiamine(out). The catalysed reaction is agmatine(out) = agmatine(in). It carries out the reaction putrescine(out) = putrescine(in). The enzyme catalyses spermidine(in) = spermidine(out). It catalyses the reaction (R)-carnitine(in) = (R)-carnitine(out). The catalysed reaction is O-isobutanoyl-(R)-carnitine(in) = O-isobutanoyl-(R)-carnitine(out). It carries out the reaction O-acetyl-(R)-carnitine(in) = O-acetyl-(R)-carnitine(out). The enzyme catalyses O-3-hydroxybutanoyl-(R)-carnitine(in) = O-3-hydroxybutanoyl-(R)-carnitine(out). It catalyses the reaction O-propanoyl-(R)-carnitine(in) = O-propanoyl-(R)-carnitine(out). The catalysed reaction is O-butanoyl-(R)-carnitine(in) = O-butanoyl-(R)-carnitine(out). It carries out the reaction O-2-methylbutanoyl-(R)-carnitine(in) = O-2-methylbutanoyl-(R)-carnitine(out). The enzyme catalyses O-3-methylbutanoyl-(R)-carnitine(in) = O-3-methylbutanoyl-(R)-carnitine(out). It catalyses the reaction O-hexanoyl-(R)-carnitine(in) = O-hexanoyl-(R)-carnitine(out). The catalysed reaction is L-histidyl-L-proline diketopiperazine(in) = L-histidyl-L-proline diketopiperazine(out). It carries out the reaction (R)-salsolinol(in) = (R)-salsolinol(out). The enzyme catalyses prostaglandin F2alpha(out) = prostaglandin F2alpha(in). It catalyses the reaction prostaglandin E2(out) = prostaglandin E2(in). With respect to regulation, phosphorylation of the transporter leads to changes in its substrate affinity, resulting in a regulation of the transport activity. In contrast with human ortholog, ASP uptake is stimulated by protein kinase A (PKA) and C (PKC) and endogenous tyrosine kinase activation. ASP affinity is induced by PKC-dependent phosphorylation. Inhibited by cGMP, most likely through a cGMP-binding protein that interacts with OCT1. Electrogenic voltage-dependent transporter that mediates the transport of a variety of organic cations such as endogenous bioactive amines, cationic drugs and xenobiotics. Functions as a pH- and Na(+)-independent, bidirectional transporter. Cation cellular uptake or release is driven by the electrochemical potential (i.e. membrane potential and concentration gradient) and substrate selectivity. Hydrophobicity is a major requirement for recognition in polyvalent substrates and inhibitors. Primarily expressed in the basolateral membrane of hepatocytes and proximal tubules and involved in the uptake and disposition of cationic compounds from the blood by hepatic and renal clearance. Most likely functions as an uptake carrier in enterocytes contributing to the intestinal excretion and elimination of organic cations from the systemic circulation. Transports endogenous monoamines such as N-1-methylnicotinamide (NMN), guanidine, neurotransmitters dopamine, serotonin, noradrenaline, adrenaline and histamine, and quaternary ammonium compound such as choline. Also transports natural polyamines such as spermidine, agmatine and putrescine at low affinity, but relatively high turnover. Involved in the hepatic uptake of vitamin B1/thiamine, hence regulating hepatic lipid and energy metabolism. Contributes to the influx and efflux of fatty acid carriers carnitines and acylcarnitines across the basolateral membrane of hepatocytes, from the liver to the systemic circulation and inversely and may be involved in regulating the systemic availability of hepatic acylcarnitines. Mediates the bidirectional transport of acetylcholine (ACh) at the apical membrane of ciliated cell in airway epithelium, thereby playing a role in luminal release of ACh from bronchial epithelium. Transports dopaminergic neuromodulators cyclo(his-pro) and salsolinol with lower efficency. Also capable of transporting non-amine endogenous compounds such as prostaglandin E2 (PGE2) and prostaglandin F2-alpha (PGF2-alpha). May contribute to the transport of cationic compounds in testis across the blood-testis-barrier. Also mediates the uptake of xenobiotics tributylmethylammonium (TBuMA), quinidine, N-methyl-quinine (NMQ), N-methyl-quinidine (NMQD) N-(4,4-azo-n-pentyl)-quinuclidine (APQ), azidoprocainamide methoiodide (AMP), N-(4,4-azo-n-pentyl)-21-deoxyajmalinium (APDA) and 4-(4-(dimethylamino)styryl)-N-methylpyridinium (ASP). Functionally, functional isoform capable of transporting TEA. The chain is Solute carrier family 22 member 1 from Rattus norvegicus (Rat).